An 812-amino-acid chain; its full sequence is Phospholipase D alpha 1 (812 aa).

A propeptide spanning residues 1–46 (MAQMLLHGTLHATIFEAASLSNPHRASGSAPKFIRKFVEGIEDTVG) is cleaved from the precursor. One can recognise a C2 domain in the interval 1-130 (MAQMLLHGTL…LNGEEIDRWL (130 aa)). Asp-190 is a Ca(2+) binding site. The PLD phosphodiesterase 1 domain occupies 330–368 (TMFTHHQKIVVVDHELPNQGSQQRRIVSFVGGLDLCDGR). Active-site residues include His-335, Lys-337, and Asp-342. His-335 provides a ligand contact to a 1,2-diacyl-sn-glycero-3-phosphate. Positions 374 and 408 each coordinate Ca(2+). A 1,2-diacyl-sn-glycero-3-phosphate-binding residues include Gln-524 and His-663. Residues 658 to 685 (FMIYVHTKMMIVDDEYIIIGSANINQRS) form the PLD phosphodiesterase 2 domain. Catalysis depends on residues His-663, Lys-665, and Asp-670. Glu-724 is a binding site for Ca(2+).

This sequence belongs to the phospholipase D family. C2-PLD subfamily. Monomer. Ca(2+) serves as cofactor. In terms of tissue distribution, expressed in leaves, roots, developing seeds and cultured cells.

The enzyme catalyses a 1,2-diacyl-sn-glycero-3-phosphocholine + H2O = a 1,2-diacyl-sn-glycero-3-phosphate + choline + H(+). Hydrolyzes glycerol-phospholipids at the terminal phosphodiesteric bond. Plays an important role in various cellular processes. The chain is Phospholipase D alpha 1 (PLD1) from Oryza sativa subsp. japonica (Rice).